The chain runs to 190 residues: Probable chorismate pyruvate-lyase (190 aa).

R77, L115, and E174 together coordinate substrate.

Belongs to the UbiC family.

It localises to the cytoplasm. It carries out the reaction chorismate = 4-hydroxybenzoate + pyruvate. It participates in cofactor biosynthesis; ubiquinone biosynthesis. Its function is as follows. Removes the pyruvyl group from chorismate, with concomitant aromatization of the ring, to provide 4-hydroxybenzoate (4HB) for the ubiquinone pathway. This Shewanella sp. (strain MR-4) protein is Probable chorismate pyruvate-lyase.